A 192-amino-acid polypeptide reads, in one-letter code: uncharacterized protein (192 aa).

This is an uncharacterized protein from Magallana gigas (Pacific oyster).